A 121-amino-acid chain; its full sequence is Small ribosomal subunit protein uS10 (121 aa).

Residues Met-1–Lys-20 are disordered.

Belongs to the universal ribosomal protein uS10 family. Part of the 30S ribosomal subunit.

Its function is as follows. Involved in the binding of tRNA to the ribosomes. This is Small ribosomal subunit protein uS10 from Mycoplasmoides gallisepticum (strain R(low / passage 15 / clone 2)) (Mycoplasma gallisepticum).